Reading from the N-terminus, the 176-residue chain is Disulfide bond formation protein B (176 aa).

Residues 1–14 lie on the Cytoplasmic side of the membrane; it reads MMRSLNRCSKHRAA. A helical membrane pass occupies residues 15–31; sequence WLLLALTTFSLELVALY. Residues 32–49 are Periplasmic-facing; that stretch reads FQHVMLLKPCVLCVYQRC. Cysteine 41 and cysteine 44 are disulfide-bonded. The helical transmembrane segment at 50–65 threads the bilayer; sequence ALYGVVAAGLVGAIAP. The Cytoplasmic segment spans residues 66–71; sequence ATPLRF. Residues 72-89 traverse the membrane as a helical segment; it reads SGLAIWLYSAWEGLQLAM. The Periplasmic portion of the chain corresponds to 90-144; the sequence is KHTDIQLHPSPFVTCDFFVSFPAWLPLDKWLPSVFSASGDCAVRQWHFLSLEMPQ. A disulfide bridge links cysteine 104 with cysteine 130. A helical transmembrane segment spans residues 145–163; it reads WMIVIFGAYLAVAVLILLA. The Cytoplasmic segment spans residues 164 to 176; that stretch reads QFFPPRKRDLFSR.

Belongs to the DsbB family.

It is found in the cell inner membrane. Functionally, required for disulfide bond formation in some periplasmic proteins. Acts by oxidizing the DsbA protein. In Sodalis glossinidius (strain morsitans), this protein is Disulfide bond formation protein B.